Consider the following 301-residue polypeptide: Phosphatidylserine decarboxylase proenzyme (301 aa).

Catalysis depends on charge relay system; for autoendoproteolytic cleavage activity residues aspartate 115, histidine 171, and serine 258. Serine 258 acts as the Schiff-base intermediate with substrate; via pyruvic acid; for decarboxylase activity in catalysis. Serine 258 carries the pyruvic acid (Ser); by autocatalysis modification.

The protein belongs to the phosphatidylserine decarboxylase family. PSD-B subfamily. Prokaryotic type II sub-subfamily. As to quaternary structure, heterodimer of a large membrane-associated beta subunit and a small pyruvoyl-containing alpha subunit. The cofactor is pyruvate. Is synthesized initially as an inactive proenzyme. Formation of the active enzyme involves a self-maturation process in which the active site pyruvoyl group is generated from an internal serine residue via an autocatalytic post-translational modification. Two non-identical subunits are generated from the proenzyme in this reaction, and the pyruvate is formed at the N-terminus of the alpha chain, which is derived from the carboxyl end of the proenzyme. The autoendoproteolytic cleavage occurs by a canonical serine protease mechanism, in which the side chain hydroxyl group of the serine supplies its oxygen atom to form the C-terminus of the beta chain, while the remainder of the serine residue undergoes an oxidative deamination to produce ammonia and the pyruvoyl prosthetic group on the alpha chain. During this reaction, the Ser that is part of the protease active site of the proenzyme becomes the pyruvoyl prosthetic group, which constitutes an essential element of the active site of the mature decarboxylase.

The protein localises to the cell membrane. It carries out the reaction a 1,2-diacyl-sn-glycero-3-phospho-L-serine + H(+) = a 1,2-diacyl-sn-glycero-3-phosphoethanolamine + CO2. The protein operates within phospholipid metabolism; phosphatidylethanolamine biosynthesis; phosphatidylethanolamine from CDP-diacylglycerol: step 2/2. Functionally, catalyzes the formation of phosphatidylethanolamine (PtdEtn) from phosphatidylserine (PtdSer). In Chlamydia pneumoniae (Chlamydophila pneumoniae), this protein is Phosphatidylserine decarboxylase proenzyme.